The following is a 92-amino-acid chain: Small ribosomal subunit protein uS19 (92 aa).

It belongs to the universal ribosomal protein uS19 family.

Its function is as follows. Protein S19 forms a complex with S13 that binds strongly to the 16S ribosomal RNA. The sequence is that of Small ribosomal subunit protein uS19 from Rhodospirillum centenum (strain ATCC 51521 / SW).